Here is a 263-residue protein sequence, read N- to C-terminus: Probable adenylate kinase 7, mitochondrial (263 aa).

A mitochondrion-targeting transit peptide spans 1 to 30 (MAWLSRVRGVSPVTRLAAIRRSFGSAAALE). An ATP-binding site is contributed by 72 to 77 (GAWRHV). Residues 92 to 121 (SMGSLVRQELNPRSSLYKEIASAVNERKLV) form an NMP region. AMP-binding positions include Arg98, 119–121 (KLV), 149–152 (GIPR), Gln156, and Arg206. Gly234 is a binding site for ATP.

Belongs to the adenylate kinase family. In terms of assembly, monomer.

Its subcellular location is the mitochondrion. It carries out the reaction AMP + ATP = 2 ADP. In terms of biological role, catalyzes the reversible transfer of the terminal phosphate group between ATP and AMP. Plays an important role in cellular energy homeostasis and in adenine nucleotide metabolism. This chain is Probable adenylate kinase 7, mitochondrial, found in Arabidopsis thaliana (Mouse-ear cress).